The primary structure comprises 124 residues: Large ribosomal subunit protein bL12 (124 aa).

Belongs to the bacterial ribosomal protein bL12 family. In terms of assembly, homodimer. Part of the ribosomal stalk of the 50S ribosomal subunit. Forms a multimeric L10(L12)X complex, where L10 forms an elongated spine to which 2 to 4 L12 dimers bind in a sequential fashion. Binds GTP-bound translation factors.

Forms part of the ribosomal stalk which helps the ribosome interact with GTP-bound translation factors. Is thus essential for accurate translation. The chain is Large ribosomal subunit protein bL12 from Borreliella afzelii (strain PKo) (Borrelia afzelii).